The chain runs to 397 residues: Nickel-cobalt-cadmium resistance protein NccB (397 aa).

The helical transmembrane segment at 10 to 30 (PSWPMIAGVAAAAALVGFGAA) threads the bilayer. A coiled-coil region spans residues 137–195 (EAAAMAAERKVAQARADLARKTYERESSLFQQGVTPRQEMESARIALDVAQAEVQRAAT).

Belongs to the membrane fusion protein (MFP) (TC 8.A.1) family.

It is found in the cell inner membrane. In terms of biological role, component of the NCC cation efflux system that confers resistance to nickel, cobalt and cadmium. The sequence is that of Nickel-cobalt-cadmium resistance protein NccB (nccB) from Alcaligenes xylosoxydans xylosoxydans (Achromobacter xylosoxidans).